The chain runs to 287 residues: Inositol diphosphatase siw14 (287 aa).

Residues 85-256 form the Tyrosine-protein phosphatase domain; sequence NFGVVYPGII…LNDLKRYISD (172 aa). A phosphoserine mark is found at Ser-156 and Ser-159. The Phosphocysteine intermediate role is filled by Cys-189.

The protein belongs to the protein-tyrosine phosphatase family. Atypical dual-specificity phosphatase Siw14-like subfamily.

The protein resides in the cytoplasm. Its subcellular location is the nucleus. It carries out the reaction 5-diphospho-1D-myo-inositol 1,2,3,4,6-pentakisphosphate + H2O = 1D-myo-inositol hexakisphosphate + phosphate + H(+). The enzyme catalyses 1-diphospho-1D-myo-inositol 2,3,4,5,6-pentakisphosphate + H2O = 1D-myo-inositol hexakisphosphate + phosphate + H(+). It catalyses the reaction 1,5-bis(diphospho)-1D-myo-inositol 2,3,4,6-tetrakisphosphate + H2O = 1-diphospho-1D-myo-inositol 2,3,4,5,6-pentakisphosphate + phosphate + 2 H(+). With respect to regulation, activity is inhibited by the reaction product inorganic phosphate and by sulfate (a phosphate mimetic). Not inhibited by magnesium. Its function is as follows. Cleaves the beta-phosphate at the 1- and 5-position of soluble inositol pyrophosphates. Has exopolyphosphatase activity in vitro but does not appear to contribute to the homeostasis of cellular polyphosphate. In Schizosaccharomyces pombe (strain 972 / ATCC 24843) (Fission yeast), this protein is Inositol diphosphatase siw14.